Here is a 239-residue protein sequence, read N- to C-terminus: MNEDIKNNLNNSDEFNGKIIVGLDEAGRGPVIGPMVIASVKINENDLPKLHDLGLKDSKQLTKKKREELYIKISEICDVKKIVIDPEKIDEQMEIINLNKIELGAFSKLANHFIKENENISIYIDACSSNEQSFSNQFKAKLINKNVEIIAEHKADENYKIVSAASIIAKVTRDNVIEEYKEIFGEIGSGYPSDPKTKKFLKNYVHENKGLPKIARKSWATSKNLLKEIEESKIFQWVK.

The RNase H type-2 domain maps to Lys-18 to Glu-231. A divalent metal cation contacts are provided by Asp-24, Glu-25, and Asp-125.

This sequence belongs to the RNase HII family. The cofactor is Mn(2+). It depends on Mg(2+) as a cofactor.

The protein resides in the cytoplasm. The catalysed reaction is Endonucleolytic cleavage to 5'-phosphomonoester.. Functionally, endonuclease that specifically degrades the RNA of RNA-DNA hybrids. This Methanococcus maripaludis (strain C7 / ATCC BAA-1331) protein is Ribonuclease HII.